Here is a 280-residue protein sequence, read N- to C-terminus: 4-diphosphocytidyl-2-C-methyl-D-erythritol kinase (280 aa).

Lysine 8 is a catalytic residue. 91–101 (PVAAGLAGGST) lines the ATP pocket. Residue aspartate 133 is part of the active site.

This sequence belongs to the GHMP kinase family. IspE subfamily.

It carries out the reaction 4-CDP-2-C-methyl-D-erythritol + ATP = 4-CDP-2-C-methyl-D-erythritol 2-phosphate + ADP + H(+). It participates in isoprenoid biosynthesis; isopentenyl diphosphate biosynthesis via DXP pathway; isopentenyl diphosphate from 1-deoxy-D-xylulose 5-phosphate: step 3/6. In terms of biological role, catalyzes the phosphorylation of the position 2 hydroxy group of 4-diphosphocytidyl-2C-methyl-D-erythritol. In Clostridium botulinum (strain Okra / Type B1), this protein is 4-diphosphocytidyl-2-C-methyl-D-erythritol kinase.